The sequence spans 317 residues: Beta-ketoacyl-[acyl-carrier-protein] synthase III (317 aa).

Residues Cys-112 and His-244 contribute to the active site. The tract at residues 245-249 is ACP-binding; the sequence is QANLR. Asn-274 is a catalytic residue.

It belongs to the thiolase-like superfamily. FabH family. Homodimer.

The protein resides in the cytoplasm. The enzyme catalyses malonyl-[ACP] + acetyl-CoA + H(+) = 3-oxobutanoyl-[ACP] + CO2 + CoA. The protein operates within lipid metabolism; fatty acid biosynthesis. In terms of biological role, catalyzes the condensation reaction of fatty acid synthesis by the addition to an acyl acceptor of two carbons from malonyl-ACP. Catalyzes the first condensation reaction which initiates fatty acid synthesis and may therefore play a role in governing the total rate of fatty acid production. Possesses both acetoacetyl-ACP synthase and acetyl transacylase activities. Its substrate specificity determines the biosynthesis of branched-chain and/or straight-chain of fatty acids. The protein is Beta-ketoacyl-[acyl-carrier-protein] synthase III of Salmonella paratyphi B (strain ATCC BAA-1250 / SPB7).